A 34-amino-acid polypeptide reads, in one-letter code: MSDIN-like toxin proprotein 4 (34 aa).

A propeptide spanning residues 1–10 (MSDINTARLP) is cleaved from the precursor. Positions 11-20 (LFLPPVRMPP) form a cross-link, cyclopeptide (Leu-Pro). Residues 21–34 (CVGDDIEMVLTRGE) constitute a propeptide that is removed on maturation.

The protein belongs to the MSDIN fungal toxin family. Post-translationally, processed by the macrocyclase-peptidase enzyme POPB to yield a toxic cyclic decapeptide. POPB first removes 10 residues from the N-terminus. Conformational trapping of the remaining peptide forces the enzyme to release this intermediate rather than proceed to macrocyclization. The enzyme rebinds the remaining peptide in a different conformation and catalyzes macrocyclization of the N-terminal 10 residues.

Its function is as follows. Probable toxin that belongs to the MSDIN-like toxin family responsible for a large number of food poisoning cases and deaths. In Amanita bisporigera (Destroying angel), this protein is MSDIN-like toxin proprotein 4.